The primary structure comprises 172 residues: Ribosome maturation factor RimM (172 aa).

In terms of domain architecture, PRC barrel spans glutamate 94–methionine 167.

This sequence belongs to the RimM family. As to quaternary structure, binds ribosomal protein uS19.

The protein localises to the cytoplasm. Its function is as follows. An accessory protein needed during the final step in the assembly of 30S ribosomal subunit, possibly for assembly of the head region. Essential for efficient processing of 16S rRNA. May be needed both before and after RbfA during the maturation of 16S rRNA. It has affinity for free ribosomal 30S subunits but not for 70S ribosomes. The polypeptide is Ribosome maturation factor RimM (Carboxydothermus hydrogenoformans (strain ATCC BAA-161 / DSM 6008 / Z-2901)).